A 420-amino-acid polypeptide reads, in one-letter code: Putative T-box protein 33 (420 aa).

Positions 93 to 291 (LWKELHYLSN…ANPTSRGDAK (199 aa)) form a DNA-binding region, T-box. Residues 395-412 (SPPLQPTATSPEASQNQI) show a composition bias toward polar residues. Residues 395–420 (SPPLQPTATSPEASQNQIKLEMNQYM) are disordered.

The protein resides in the nucleus. This Caenorhabditis elegans protein is Putative T-box protein 33 (tbx-33).